The primary structure comprises 318 residues: Transcription factor MYBS3 (318 aa).

Disordered regions lie at residues 1–20 (MTRRCSHCSHNGHNSRTCPN) and 50–98 (AAGS…PWTE). The CCHC-type zinc-finger motif lies at 3 to 20 (RRCSHCSHNGHNSRTCPN). The span at 8–18 (CSHNGHNSRTC) shows a compositional bias: polar residues. Residues 50–77 (AAGSTSGGASPADGPDAAPTAADGYASD) are compositionally biased toward low complexity. In terms of domain architecture, HTH myb-type spans 88–144 (RDRKKGVPWTEEEHRRFLLGLQKLGKGDWRGISRNFVVSRTPTQVASHAQKYFIRQS). The H-T-H motif DNA-binding region spans 116–140 (WRGISRNFVVSRTPTQVASHAQKYF). The interval 159–200 (VPDESMDLPPLPGGQEPETQVLNQPALPPPREEEEVDSMESD) is disordered.

As to expression, expressed in all tissues, with the highest level in senescent leaves.

Its subcellular location is the nucleus. In terms of biological role, transcription repressor that binds to 5'-TATCCA-3' elements in gene promoters. Contributes to the sugar-repressed transcription of promoters containing SRS or 5'-TATCCA-3' elements. Transcription repressor involved in a cold stress response pathway that confers cold tolerance. Suppresses the DREB1-dependent signaling pathway under prolonged cold stress. DREB1 responds quickly and transiently while MYBS3 responds slowly to cold stress. They may act sequentially and complementarily for adaptation to short- and long-term cold stress. The polypeptide is Transcription factor MYBS3 (Oryza sativa subsp. japonica (Rice)).